Consider the following 171-residue polypeptide: MTKQHAFTREDLLRCSRGELFGPGNAQLPAPNMLMVDRITHISDEGGKFGKGELVAELDINPDLWFFACHFEGDPVMPGCLGLDAMWQLVGFYLGWQGNPGRGRALGSGEVKFFGQVLPTAKKVTYNIHIKRVLKGKLNLAIADGSVSVDGREIYTAEGLRVGVFTSTENF.

Residue H70 is part of the active site.

It belongs to the thioester dehydratase family. FabA subfamily. Homodimer.

It localises to the cytoplasm. It carries out the reaction a (3R)-hydroxyacyl-[ACP] = a (2E)-enoyl-[ACP] + H2O. The enzyme catalyses (3R)-hydroxydecanoyl-[ACP] = (2E)-decenoyl-[ACP] + H2O. It catalyses the reaction (2E)-decenoyl-[ACP] = (3Z)-decenoyl-[ACP]. It functions in the pathway lipid metabolism; fatty acid biosynthesis. Its function is as follows. Necessary for the introduction of cis unsaturation into fatty acids. Catalyzes the dehydration of (3R)-3-hydroxydecanoyl-ACP to E-(2)-decenoyl-ACP and then its isomerization to Z-(3)-decenoyl-ACP. Can catalyze the dehydratase reaction for beta-hydroxyacyl-ACPs with saturated chain lengths up to 16:0, being most active on intermediate chain length. This is 3-hydroxydecanoyl-[acyl-carrier-protein] dehydratase from Pseudomonas syringae pv. syringae (strain B728a).